Consider the following 577-residue polypeptide: Arginine--tRNA ligase (577 aa).

The 'HIGH' region motif lies at 122-132 (PNVAKEMHVGH).

It belongs to the class-I aminoacyl-tRNA synthetase family. Monomer.

The protein resides in the cytoplasm. It catalyses the reaction tRNA(Arg) + L-arginine + ATP = L-arginyl-tRNA(Arg) + AMP + diphosphate. In Haemophilus influenzae (strain PittEE), this protein is Arginine--tRNA ligase.